A 234-amino-acid chain; its full sequence is Cytidylate kinase (234 aa).

ATP is bound at residue 10 to 18 (GYSACGKST).

Belongs to the cytidylate kinase family. Type 1 subfamily.

The protein localises to the cytoplasm. It carries out the reaction CMP + ATP = CDP + ADP. It catalyses the reaction dCMP + ATP = dCDP + ADP. In Cytophaga hutchinsonii (strain ATCC 33406 / DSM 1761 / CIP 103989 / NBRC 15051 / NCIMB 9469 / D465), this protein is Cytidylate kinase.